Here is a 153-residue protein sequence, read N- to C-terminus: MKKSERQAVIEQLISEYPIATQEELMAKLKAEGIAATQATISRDIREMQIVKTPDEHGQTRYAIFKTTNKNEQDRLFETLHDVVTSIDRVEFMNIIHTLPSNGNLLAAIIDDLNLPEVSGTLAGHDTIFVVSPNTTVAKQLYESFASHISNED.

Belongs to the ArgR family.

The protein localises to the cytoplasm. It participates in amino-acid degradation; L-arginine degradation via ADI pathway. Its function is as follows. Regulates the transcription of the arc operon, involved in arginine catabolism. The protein is Arginine regulator (argR1) of Lactiplantibacillus plantarum (strain ATCC BAA-793 / NCIMB 8826 / WCFS1) (Lactobacillus plantarum).